Consider the following 638-residue polypeptide: ATP-dependent zinc metalloprotease FtsH (638 aa).

The Cytoplasmic portion of the chain corresponds to 1–4 (MNNQ). A helical transmembrane segment spans residues 5–25 (GKNIIVWAVIFVFVILLFNVF). The Periplasmic portion of the chain corresponds to 26–103 (QSDGLLSSKN…VVPPETRMNT (78 aa)). A helical membrane pass occupies residues 104 to 124 (FLSFLISWFPMLLLIGVWVFF). The Cytoplasmic segment spans residues 125 to 638 (MRQMHGGGKA…PIKAKKEDKS (514 aa)). ATP is bound at residue 195-202 (GPPGTGKT). His-417 contributes to the Zn(2+) binding site. Glu-418 is a catalytic residue. Zn(2+) contacts are provided by His-421 and Asp-495. Residues 523-544 (SASEDMYTNRNSSSDRSESTSE) form a disordered region.

In the central section; belongs to the AAA ATPase family. It in the C-terminal section; belongs to the peptidase M41 family. In terms of assembly, homohexamer. Zn(2+) is required as a cofactor.

It localises to the cell inner membrane. Its function is as follows. Acts as a processive, ATP-dependent zinc metallopeptidase for both cytoplasmic and membrane proteins. Plays a role in the quality control of integral membrane proteins. The chain is ATP-dependent zinc metalloprotease FtsH from Rickettsia bellii (strain RML369-C).